Consider the following 60-residue polypeptide: Mastoparan (60 aa).

Residues 1–27 (MKDTILILFTAFIALLGFFGMSAEALA) form the signal peptide. AXPX repeat units lie at residues 27 to 30 (ADPL), 31 to 34 (ADPS), 35 to 38 (AGPN), and 41 to 44 (ADPE). The propeptide occupies 28-45 (DPLADPSAGPNAEADPEA). L59 carries the leucine amide modification.

Belongs to the MCD family. Mastoparan subfamily. In terms of tissue distribution, expressed by the venom gland.

Its subcellular location is the secreted. It localises to the target cell membrane. Functionally, mast cell degranulating peptide. Its mast cell degranulation activity may be related to the activation of G-protein coupled receptors in mast cells as well as interaction with other proteins located in cell endosomal membranes in the mast cells. Has a membranolytic activity on human glioblastoma multiforme cells (brain tumor cells) that leads to cell necrosis. In Vespa orientalis (Oriental hornet), this protein is Mastoparan.